We begin with the raw amino-acid sequence, 383 residues long: Chaperone protein DnaJ (383 aa).

The J domain occupies 5 to 69; sequence DYYDILGVSK…QKRAQYDQFG (65 aa). The segment at 138–222 adopts a CR-type zinc-finger fold; sequence GKTTTIKYDR…CHGAGHVHER (85 aa). Positions 151, 154, 168, 171, 194, 197, 210, and 213 each coordinate Zn(2+). CXXCXGXG motif repeat units lie at residues 151-158, 168-175, 194-201, and 210-217; these read CKTCHGTG, CPRCHGAG, CPECNGTG, and CDTCHGAG.

The protein belongs to the DnaJ family. In terms of assembly, homodimer. It depends on Zn(2+) as a cofactor.

It is found in the cytoplasm. Participates actively in the response to hyperosmotic and heat shock by preventing the aggregation of stress-denatured proteins and by disaggregating proteins, also in an autonomous, DnaK-independent fashion. Unfolded proteins bind initially to DnaJ; upon interaction with the DnaJ-bound protein, DnaK hydrolyzes its bound ATP, resulting in the formation of a stable complex. GrpE releases ADP from DnaK; ATP binding to DnaK triggers the release of the substrate protein, thus completing the reaction cycle. Several rounds of ATP-dependent interactions between DnaJ, DnaK and GrpE are required for fully efficient folding. Also involved, together with DnaK and GrpE, in the DNA replication of plasmids through activation of initiation proteins. In Limosilactobacillus reuteri (strain DSM 20016) (Lactobacillus reuteri), this protein is Chaperone protein DnaJ.